Consider the following 486-residue polypeptide: Protein nucleotidyltransferase YdiU (486 aa).

Residues Gly90, Gly92, Arg93, Lys113, Asp125, Gly126, Arg176, and Arg183 each coordinate ATP. Catalysis depends on Asp252, which acts as the Proton acceptor. Residues Asn253 and Asp262 each contribute to the Mg(2+) site. Residue Asp262 coordinates ATP.

It belongs to the SELO family. Mg(2+) is required as a cofactor. It depends on Mn(2+) as a cofactor.

The catalysed reaction is L-seryl-[protein] + ATP = 3-O-(5'-adenylyl)-L-seryl-[protein] + diphosphate. The enzyme catalyses L-threonyl-[protein] + ATP = 3-O-(5'-adenylyl)-L-threonyl-[protein] + diphosphate. It catalyses the reaction L-tyrosyl-[protein] + ATP = O-(5'-adenylyl)-L-tyrosyl-[protein] + diphosphate. It carries out the reaction L-histidyl-[protein] + UTP = N(tele)-(5'-uridylyl)-L-histidyl-[protein] + diphosphate. The catalysed reaction is L-seryl-[protein] + UTP = O-(5'-uridylyl)-L-seryl-[protein] + diphosphate. The enzyme catalyses L-tyrosyl-[protein] + UTP = O-(5'-uridylyl)-L-tyrosyl-[protein] + diphosphate. In terms of biological role, nucleotidyltransferase involved in the post-translational modification of proteins. It can catalyze the addition of adenosine monophosphate (AMP) or uridine monophosphate (UMP) to a protein, resulting in modifications known as AMPylation and UMPylation. This chain is Protein nucleotidyltransferase YdiU, found in Pseudomonas putida (strain W619).